A 350-amino-acid chain; its full sequence is Small ribosomal subunit biogenesis GTPase RsgA (350 aa).

A compositionally biased stretch (polar residues) spans 1–17 (MSKNKLSKGQQRRVNAN). A disordered region spans residues 1–33 (MSKNKLSKGQQRRVNANHQRRLKTSKEKPDYDD). The 170-residue stretch at 104–273 (TSVLTRPDFY…VIDSPGVREF (170 aa)) folds into the CP-type G domain. GTP contacts are provided by residues 160–163 (NKID) and 214–222 (GQSGVGKSS). Zn(2+) is bound by residues C297, C302, H304, and C310.

The protein belongs to the TRAFAC class YlqF/YawG GTPase family. RsgA subfamily. As to quaternary structure, monomer. Associates with 30S ribosomal subunit, binds 16S rRNA. Requires Zn(2+) as cofactor.

It is found in the cytoplasm. In terms of biological role, one of several proteins that assist in the late maturation steps of the functional core of the 30S ribosomal subunit. Helps release RbfA from mature subunits. May play a role in the assembly of ribosomal proteins into the subunit. Circularly permuted GTPase that catalyzes slow GTP hydrolysis, GTPase activity is stimulated by the 30S ribosomal subunit. This is Small ribosomal subunit biogenesis GTPase RsgA from Shigella flexneri.